The chain runs to 327 residues: DNA repair and recombination protein RadA (327 aa).

Residue 113–120 (GEFGSGKS) participates in ATP binding.

This sequence belongs to the eukaryotic RecA-like protein family.

Its function is as follows. Involved in DNA repair and in homologous recombination. Binds and assemble on single-stranded DNA to form a nucleoprotein filament. Hydrolyzes ATP in a ssDNA-dependent manner and promotes DNA strand exchange between homologous DNA molecules. The polypeptide is DNA repair and recombination protein RadA (Ignicoccus hospitalis (strain KIN4/I / DSM 18386 / JCM 14125)).